The sequence spans 501 residues: Probable cytosol aminopeptidase (501 aa).

Mn(2+)-binding residues include Lys-267 and Asp-272. Lys-279 is a catalytic residue. Mn(2+) is bound by residues Asp-290, Asp-349, and Glu-351. Arg-353 is a catalytic residue.

It belongs to the peptidase M17 family. Mn(2+) serves as cofactor.

It is found in the cytoplasm. It carries out the reaction Release of an N-terminal amino acid, Xaa-|-Yaa-, in which Xaa is preferably Leu, but may be other amino acids including Pro although not Arg or Lys, and Yaa may be Pro. Amino acid amides and methyl esters are also readily hydrolyzed, but rates on arylamides are exceedingly low.. The enzyme catalyses Release of an N-terminal amino acid, preferentially leucine, but not glutamic or aspartic acids.. Functionally, presumably involved in the processing and regular turnover of intracellular proteins. Catalyzes the removal of unsubstituted N-terminal amino acids from various peptides. In Hamiltonella defensa subsp. Acyrthosiphon pisum (strain 5AT), this protein is Probable cytosol aminopeptidase.